Here is a 70-residue protein sequence, read N- to C-terminus: Delta-hexatoxin-Mg1b (70 aa).

The first 26 residues, 1 to 26 (MKILEKALLENDSAAEEESRNLRTKR), serve as a signal peptide directing secretion. 4 disulfides stabilise this stretch: cysteine 27–cysteine 41, cysteine 34–cysteine 46, cysteine 40–cysteine 57, and cysteine 42–cysteine 68.

Expressed by the venom gland.

It localises to the secreted. Functionally, inhibits tetrodotoxin-sensitive sodium channels (Nav). Intracranial injection into mice causes strong convulsions and death. Intrathorax injection into crickets causes paralysis prolonged for 2 minutes, followed by recovery. The polypeptide is Delta-hexatoxin-Mg1b (Macrothele gigas (Japanese funnel web spider)).